A 215-amino-acid chain; its full sequence is Nucleoredoxin-like protein 1 (215 aa).

The Thioredoxin; atypical domain occupies Met1–Met164. The interval Asp190–Gly215 is disordered.

The protein belongs to the nucleoredoxin family.

It is found in the cell projection. The protein localises to the cilium. Its subcellular location is the photoreceptor outer segment. In terms of biological role, plays an important role in retinal cone photoreceptor survival. May play a role in cone cell viability, slowing down cone degeneration, does not seem to play a role in degenerating rods. This is Nucleoredoxin-like protein 1 (nxnl1) from Danio rerio (Zebrafish).